Here is a 119-residue protein sequence, read N- to C-terminus: Large ribosomal subunit protein bL20 (119 aa).

The protein belongs to the bacterial ribosomal protein bL20 family.

Its function is as follows. Binds directly to 23S ribosomal RNA and is necessary for the in vitro assembly process of the 50S ribosomal subunit. It is not involved in the protein synthesizing functions of that subunit. The polypeptide is Large ribosomal subunit protein bL20 (Rhodospirillum centenum (strain ATCC 51521 / SW)).